We begin with the raw amino-acid sequence, 131 residues long: Peptide methionine sulfoxide reductase MsrB (131 aa).

In terms of domain architecture, MsrB spans 8 to 130 (DAEWRAQLTD…NSVCLDLKRS (123 aa)). Residues Cys47, Cys50, Cys96, and Cys99 each contribute to the Zn(2+) site. Cys119 acts as the Nucleophile in catalysis.

Belongs to the MsrB Met sulfoxide reductase family. Zn(2+) serves as cofactor.

It carries out the reaction L-methionyl-[protein] + [thioredoxin]-disulfide + H2O = L-methionyl-(R)-S-oxide-[protein] + [thioredoxin]-dithiol. This Alkalilimnicola ehrlichii (strain ATCC BAA-1101 / DSM 17681 / MLHE-1) protein is Peptide methionine sulfoxide reductase MsrB.